A 327-amino-acid chain; its full sequence is MYNLRNRSFLNLLDFTSKDIKYLLDLSINLKKSKYAGIEVQKLKGKNIVIIFEKDSTRTRCAFEIAAYDQGANITYLGSKGNQMGSKESMIDTARVLGRMYDAIGFRGFSQQTVECLANYSNVPVYNGLTDISHPTQILADLMTIKEHKGSLKGIKIVFCGDGRGNVANSLLKGCAIMGLDFRIFAPKELFPDPDLTLKARSLALESGGKITITDSKEEAVKCADVVYTDVWVSMGESNWEDRINLLKAYQVNKEIMCMAKDDAIFMHCLPAFHDLNTVIGKDIFDKYGLDGIEVTEEIFESKNSVVFDVAENRVHTIKAIMVSTLG.

Carbamoyl phosphate is bound by residues 56 to 59 (STRT), glutamine 83, arginine 107, and 134 to 137 (HPTQ). Residues asparagine 166, aspartate 230, and 234 to 235 (SM) contribute to the L-ornithine site. Residues 269–270 (CL) and arginine 314 contribute to the carbamoyl phosphate site.

It belongs to the aspartate/ornithine carbamoyltransferase superfamily. OTCase family.

Its subcellular location is the cytoplasm. It catalyses the reaction carbamoyl phosphate + L-ornithine = L-citrulline + phosphate + H(+). It participates in amino-acid degradation; L-arginine degradation via ADI pathway; carbamoyl phosphate from L-arginine: step 2/2. Its function is as follows. Reversibly catalyzes the transfer of the carbamoyl group from carbamoyl phosphate (CP) to the N(epsilon) atom of ornithine (ORN) to produce L-citrulline. The sequence is that of Ornithine carbamoyltransferase from Borreliella burgdorferi (strain ZS7) (Borrelia burgdorferi).